The following is a 1270-amino-acid chain: Microtubule-associated tumor suppressor 1 (1270 aa).

The segment covering 1–14 (MTDDNSDDKIEDEL) has biased composition (acidic residues). Disordered stretches follow at residues 1-50 (MTDD…NSAN) and 184-236 (FHTA…VTPS). Low complexity predominate over residues 38–50 (NSSASSVNWNSAN). Threonine 186 is modified (phosphothreonine). Low complexity predominate over residues 197–211 (SGSTSSLSYSTWTSS). The segment covering 212–228 (HSDKTHARETTYDRESF) has biased composition (basic and acidic residues). Phosphoserine is present on residues serine 381, serine 399, and serine 443. 2 disordered regions span residues 524 to 560 (DAALSKVTPRPQQTSASSPSSVNSRQQTVLSRTPRSD) and 592 to 622 (THSKNASHRVPRTTSAVKSNQEDVDKASSSN). A compositionally biased stretch (polar residues) spans 533–556 (RPQQTSASSPSSVNSRQQTVLSRT). Serine 629 bears the Phosphoserine mark. Polar residues-rich tracts occupy residues 701–710 (SKTTTTSGRN), 759–776 (VSSSGKPTSLKTAQSSWV), and 797–815 (TGSTPSIASTHSELSTYSN). Residues 701 to 815 (SKTTTTSGRN…THSELSTYSN (115 aa)) form a disordered region. A coiled-coil region spans residues 940-1231 (IQHLLSEREE…RLSMENEELL (292 aa)). Residues serine 1203, serine 1224, serine 1245, serine 1255, serine 1259, serine 1261, serine 1264, and serine 1268 each carry the phosphoserine modification. The disordered stretch occupies residues 1237–1270 (GDLCSPKRSPTSSAIPLQSPRNSGSFPSPSISPR). The span at 1244–1270 (RSPTSSAIPLQSPRNSGSFPSPSISPR) shows a compositional bias: polar residues.

The protein belongs to the MTUS1 family. Homodimer. Interacts with AGTR2. Interacts with PTPN6. Isoform 1 associates with microtubules. In terms of tissue distribution, ubiquitously expressed (at protein level). Highly expressed in brain. Down-regulated in ovarian carcinoma, pancreas carcinoma, colon carcinoma and head and neck squamous cell carcinoma (HNSCC). Isoform 1 is the major isoform in most peripheral tissues. Isoform 2 is abundant in most peripheral tissues. Isoform 3 is the major isoform in brain, female reproductive tissues, thyroid and heart. Within brain it is highly expressed in corpus callosum and pons. Isoform 6 is brain-specific, it is the major isoform in cerebellum and fetal brain.

The protein localises to the mitochondrion. Its subcellular location is the golgi apparatus. It is found in the cell membrane. It localises to the nucleus. The protein resides in the cytoplasm. The protein localises to the cytoskeleton. Its subcellular location is the microtubule organizing center. It is found in the centrosome. It localises to the spindle. In terms of biological role, cooperates with AGTR2 to inhibit ERK2 activation and cell proliferation. May be required for AGTR2 cell surface expression. Together with PTPN6, induces UBE2V2 expression upon angiotensin-II stimulation. Isoform 1 inhibits breast cancer cell proliferation, delays the progression of mitosis by prolonging metaphase and reduces tumor growth. In Homo sapiens (Human), this protein is Microtubule-associated tumor suppressor 1 (MTUS1).